A 151-amino-acid chain; its full sequence is Probable desiccation-related protein LEA14 (151 aa).

Belongs to the LEA type 2 family.

This Arabidopsis thaliana (Mouse-ear cress) protein is Probable desiccation-related protein LEA14 (LEA14).